A 196-amino-acid chain; its full sequence is Ribonuclease H (196 aa).

The RNase H type-1 domain occupies 58-196 (LAKEEIIWES…GEIKADYGRK (139 aa)). Mg(2+) contacts are provided by aspartate 71, glutamate 109, aspartate 132, and aspartate 192.

This sequence belongs to the RNase H family. Requires Mn(2+) as cofactor. Mg(2+) serves as cofactor.

Its subcellular location is the cytoplasm. The enzyme catalyses Endonucleolytic cleavage to 5'-phosphomonoester.. Functionally, endonuclease that specifically degrades the RNA of RNA-DNA hybrids. This Halalkalibacterium halodurans (strain ATCC BAA-125 / DSM 18197 / FERM 7344 / JCM 9153 / C-125) (Bacillus halodurans) protein is Ribonuclease H (rnhA).